We begin with the raw amino-acid sequence, 808 residues long: MSKVLLHGTLHVTVYEVDKLREGGGPNVFGKLMANIQETVGFGEGTPKIYATIDLEKSRVGRTRMIENEPQNPRWYESFHIYCAHHASNIIFTVKDDNPIGATLLGRAYMPVRELLDGDEVDKWIEIMDEDNNPTPAGSKIHVKLQYFDVTQDRNWDRGIKTGKYPGVPYTFFAQRQGCRVSLYQDAHVPDNFIPKISLAGGKYYEPHRCWEDIFDAISDAKHFIYITGWSVYTQIPLIRDPNRQKPGGDVLLGQLLKKKADEGVRVAMLVWDDRTSVNVFKEDGLMATHDEETENFFKDTDVHCILCPRDPDDGGSIIQDLKVSTMFTHHQKIVVVDHELPRGGSQKRRVMSFVGGIDLCDGRYDSAFHPLFSTLDSAHHDDFHQPNYAGASIAKGGPREPWHDIHSRVEGPIAWDVLFNFEQRWRKQGGKNVLVDLKQLDDILIPPSPVTFPNDQETWNVQLFRSIDGGAAFGFPDTPEEASKSGLVSGKDNIIDRSIQDAYINAIRRAKHFIYIENQYFLGSSFAWKSDDIDVDEVGALHLIPKELSLKIVTKIQEGEKFIVYIVVPMWPEGIPENGSVQAILDWQRRTMEMMYKDIVDALQDKGLDDDPREYLTFFCLGNREAKKSGEYEPTEAPEPDSGYLHAQENRRFMIYVHSKMMIVDDEYIIVGSANINQRSMDGARDSEIAMGAYQPYHLATQTPARGHVHGFRMALWYEHLGMLDDSFERPENKDCVNKANEMADKCWDLYASEDLDRDLPGHLLRYPVGVTRKGDITELPGTECFPDTSARILGAKSDYLPPILTT.

One can recognise a C2 domain in the interval M1–I125. D186 is a Ca(2+) binding site. The 39-residue stretch at T326–R364 folds into the PLD phosphodiesterase 1 domain. Residues H331, K333, and D338 contribute to the active site. H331 lines the a 1,2-diacyl-sn-glycero-3-phosphate pocket. Ca(2+) is bound by residues H370 and H404. The a 1,2-diacyl-sn-glycero-3-phosphate site is built by Q520 and H659. Residues F654–S681 form the PLD phosphodiesterase 2 domain. Active-site residues include H659, K661, and D666. A Ca(2+)-binding site is contributed by E720.

It belongs to the phospholipase D family. C2-PLD subfamily. As to quaternary structure, interacts (via C2 domain) with CARDA (via RGD or KGE motifs). Ca(2+) serves as cofactor.

It catalyses the reaction a 1,2-diacyl-sn-glycero-3-phosphocholine + H2O = a 1,2-diacyl-sn-glycero-3-phosphate + choline + H(+). Hydrolyzes glycerol-phospholipids at the terminal phosphodiesteric bond. Plays an important role in various cellular processes. In Cynara cardunculus (Cardoon), this protein is Phospholipase D alpha 1.